The following is a 350-amino-acid chain: tRNA uridine(34) hydroxylase (350 aa).

The region spanning 146–240 (DDPDALFIDM…YARKAREQGL (95 aa)) is the Rhodanese domain. The Cysteine persulfide intermediate role is filled by cysteine 200.

This sequence belongs to the TrhO family.

The catalysed reaction is uridine(34) in tRNA + AH2 + O2 = 5-hydroxyuridine(34) in tRNA + A + H2O. In terms of biological role, catalyzes oxygen-dependent 5-hydroxyuridine (ho5U) modification at position 34 in tRNAs, the first step in 5-carboxymethoxyuridine (cmo5U) biosynthesis. May be part of an alternate pathway, which is able to bypass cmo5U biogenesis in a subset of tRNAs under aerobic conditions. This chain is tRNA uridine(34) hydroxylase, found in Escherichia coli O81 (strain ED1a).